The primary structure comprises 222 residues: Phosphoribosylformylglycinamidine synthase subunit PurQ (222 aa).

In terms of domain architecture, Glutamine amidotransferase type-1 spans lysine 2–valine 222. The Nucleophile role is filled by cysteine 86. Residues histidine 194 and glutamate 196 contribute to the active site.

Part of the FGAM synthase complex composed of 1 PurL, 1 PurQ and 2 PurS subunits.

The protein localises to the cytoplasm. It catalyses the reaction N(2)-formyl-N(1)-(5-phospho-beta-D-ribosyl)glycinamide + L-glutamine + ATP + H2O = 2-formamido-N(1)-(5-O-phospho-beta-D-ribosyl)acetamidine + L-glutamate + ADP + phosphate + H(+). It carries out the reaction L-glutamine + H2O = L-glutamate + NH4(+). The protein operates within purine metabolism; IMP biosynthesis via de novo pathway; 5-amino-1-(5-phospho-D-ribosyl)imidazole from N(2)-formyl-N(1)-(5-phospho-D-ribosyl)glycinamide: step 1/2. Functionally, part of the phosphoribosylformylglycinamidine synthase complex involved in the purines biosynthetic pathway. Catalyzes the ATP-dependent conversion of formylglycinamide ribonucleotide (FGAR) and glutamine to yield formylglycinamidine ribonucleotide (FGAM) and glutamate. The FGAM synthase complex is composed of three subunits. PurQ produces an ammonia molecule by converting glutamine to glutamate. PurL transfers the ammonia molecule to FGAR to form FGAM in an ATP-dependent manner. PurS interacts with PurQ and PurL and is thought to assist in the transfer of the ammonia molecule from PurQ to PurL. The polypeptide is Phosphoribosylformylglycinamidine synthase subunit PurQ (Cereibacter sphaeroides (strain ATCC 17023 / DSM 158 / JCM 6121 / CCUG 31486 / LMG 2827 / NBRC 12203 / NCIMB 8253 / ATH 2.4.1.) (Rhodobacter sphaeroides)).